Here is a 153-residue protein sequence, read N- to C-terminus: Regulatory protein RecX (153 aa).

This sequence belongs to the RecX family.

It localises to the cytoplasm. Its function is as follows. Modulates RecA activity. This chain is Regulatory protein RecX, found in Neisseria meningitidis serogroup C / serotype 2a (strain ATCC 700532 / DSM 15464 / FAM18).